A 124-amino-acid chain; its full sequence is uncharacterized protein (124 aa).

Residues 42–118 enclose the GIY-YIG domain; that stretch reads DKGGIFMFYN…INTQHSKYNI (77 aa).

This is an uncharacterized protein from Bacillus subtilis (strain 168).